We begin with the raw amino-acid sequence, 186 residues long: Putative inactive recombination-promoting nuclease-like protein YjiQ (186 aa).

The protein belongs to the Rpn/YhgA-like nuclease family.

In terms of biological role, this pseudogene is the C-terminal fragment of low activity DNA endonuclease RpnD which probably yields 3'-hydroxyl ends. The intact protein can be seen in this entry (AC B7NGZ6). Expression of the repaired protein increases the frequency of recA-independent recombination, but also decreases viability probably via DNA damage; in a RecA strain expression has no effect on viability but does induce the SOS repair response. May play a role in horizontal gene transfer. This is Putative inactive recombination-promoting nuclease-like protein YjiQ (yjiQ) from Escherichia coli (strain K12).